A 150-amino-acid chain; its full sequence is Putative biopolymer transport protein ExbB-like 2 (150 aa).

3 helical membrane passes run 5–25 (VDYGIIGFLIFLSVIVIAIAI), 63–83 (APYIGLLGTVMGIMLTFMDLG), and 97–117 (LALALKATGMGLLVAIPAIVI).

Belongs to the ExbB/TolQ family.

It is found in the cell inner membrane. This Helicobacter pylori (strain J99 / ATCC 700824) (Campylobacter pylori J99) protein is Putative biopolymer transport protein ExbB-like 2.